The sequence spans 184 residues: Elongation factor P (184 aa).

The protein belongs to the elongation factor P family.

The protein localises to the cytoplasm. The protein operates within protein biosynthesis; polypeptide chain elongation. In terms of biological role, involved in peptide bond synthesis. Stimulates efficient translation and peptide-bond synthesis on native or reconstituted 70S ribosomes in vitro. Probably functions indirectly by altering the affinity of the ribosome for aminoacyl-tRNA, thus increasing their reactivity as acceptors for peptidyl transferase. The chain is Elongation factor P from Variovorax paradoxus (strain S110).